We begin with the raw amino-acid sequence, 166 residues long: Cytochrome c-550 2 (166 aa).

The signal sequence occupies residues 1–32 (MFSRQFGRLATLALALAVAGCAGGEQSTTAEA). Residues Cys-71, Cys-74, and His-75 each coordinate heme c.

Belongs to the cytochrome c family. PsbV subfamily. Heme c serves as cofactor.

The protein resides in the cell inner membrane. Its function is as follows. Probable low-potential cytochrome c, might function in photosystem II (PSII). The sequence is that of Cytochrome c-550 2 (psbV2) from Gloeobacter violaceus (strain ATCC 29082 / PCC 7421).